The sequence spans 244 residues: Uridylate kinase (244 aa).

12 to 15 (KLSG) serves as a coordination point for ATP. The involved in allosteric activation by GTP stretch occupies residues 20–25 (GERGVG). G54 is a binding site for UMP. Residues G55 and R59 each contribute to the ATP site. UMP contacts are provided by residues D74 and 135 to 142 (IGSPYFST). 3 residues coordinate ATP: N163, Y169, and D172.

It belongs to the UMP kinase family. Homohexamer.

The protein resides in the cytoplasm. The enzyme catalyses UMP + ATP = UDP + ADP. It participates in pyrimidine metabolism; CTP biosynthesis via de novo pathway; UDP from UMP (UMPK route): step 1/1. Allosterically activated by GTP. Inhibited by UTP. In terms of biological role, catalyzes the reversible phosphorylation of UMP to UDP. This Streptococcus suis (strain 98HAH33) protein is Uridylate kinase.